The following is a 375-amino-acid chain: MKFELDTTDGRARRGRLVFDRGIVETPAFMPVGTYGTVKGMTPEEVEATGAQIILGNTFHLWLRPGQEIMKLHGDLHDFMQWKGPILTDSGGFQVFSLGDIRKITEQGVHFRNPINGDPIFLDPEKSMEIQYDLGSDIVMIFDECTPYPADWDYAKRSMEMSLRWAKRSRDRFDSLGNKNALFGIIQGSVYEDLRDISVKGLVEIGFDGYAVGGLAVGEPKADMHRILEHVCPQIPADKPRYLMGVGKPEDLVEGVRRGIDMFDCVMPTRNARNGHLFVTDGVVKIRNAKHKSDTSPLDAECDCYTCRNYSRAYLHHLDRCNEILGARLNTIHNLRYYQRLMAGLRKAIEEGKLESFVTEFYQRQGRPVPPLNVD.

Asp89 serves as the catalytic Proton acceptor. Substrate-binding positions include 89-93 (DSGGF), Asp143, Gln187, and Gly214. An RNA binding region spans residues 245 to 251 (GVGKPED). The active-site Nucleophile is the Asp264. Positions 269-273 (TRNAR) are RNA binding; important for wobble base 34 recognition. Zn(2+) is bound by residues Cys302, Cys304, Cys307, and His333.

The protein belongs to the queuine tRNA-ribosyltransferase family. In terms of assembly, homodimer. Within each dimer, one monomer is responsible for RNA recognition and catalysis, while the other monomer binds to the replacement base PreQ1. The cofactor is Zn(2+).

The catalysed reaction is 7-aminomethyl-7-carbaguanine + guanosine(34) in tRNA = 7-aminomethyl-7-carbaguanosine(34) in tRNA + guanine. The protein operates within tRNA modification; tRNA-queuosine biosynthesis. Catalyzes the base-exchange of a guanine (G) residue with the queuine precursor 7-aminomethyl-7-deazaguanine (PreQ1) at position 34 (anticodon wobble position) in tRNAs with GU(N) anticodons (tRNA-Asp, -Asn, -His and -Tyr). Catalysis occurs through a double-displacement mechanism. The nucleophile active site attacks the C1' of nucleotide 34 to detach the guanine base from the RNA, forming a covalent enzyme-RNA intermediate. The proton acceptor active site deprotonates the incoming PreQ1, allowing a nucleophilic attack on the C1' of the ribose to form the product. After dissociation, two additional enzymatic reactions on the tRNA convert PreQ1 to queuine (Q), resulting in the hypermodified nucleoside queuosine (7-(((4,5-cis-dihydroxy-2-cyclopenten-1-yl)amino)methyl)-7-deazaguanosine). In Salmonella enteritidis PT4 (strain P125109), this protein is Queuine tRNA-ribosyltransferase.